Consider the following 165-residue polypeptide: Large ribosomal subunit protein uL10 (165 aa).

The protein belongs to the universal ribosomal protein uL10 family. As to quaternary structure, part of the ribosomal stalk of the 50S ribosomal subunit. The N-terminus interacts with L11 and the large rRNA to form the base of the stalk. The C-terminus forms an elongated spine to which L12 dimers bind in a sequential fashion forming a multimeric L10(L12)X complex.

Forms part of the ribosomal stalk, playing a central role in the interaction of the ribosome with GTP-bound translation factors. In Enterobacter sp. (strain 638), this protein is Large ribosomal subunit protein uL10.